We begin with the raw amino-acid sequence, 91 residues long: Small ribosomal subunit protein bS18 (91 aa).

This sequence belongs to the bacterial ribosomal protein bS18 family. Part of the 30S ribosomal subunit. Forms a tight heterodimer with protein bS6.

Binds as a heterodimer with protein bS6 to the central domain of the 16S rRNA, where it helps stabilize the platform of the 30S subunit. The sequence is that of Small ribosomal subunit protein bS18 from Burkholderia lata (strain ATCC 17760 / DSM 23089 / LMG 22485 / NCIMB 9086 / R18194 / 383).